We begin with the raw amino-acid sequence, 486 residues long: Cardiolipin synthase A (486 aa).

2 helical membrane-spanning segments follow: residues threonine 3–valine 23 and methionine 38–phenylalanine 58. 2 PLD phosphodiesterase domains span residues methionine 219–arginine 246 and glutamate 399–serine 426. Catalysis depends on residues histidine 224, lysine 226, aspartate 231, histidine 404, lysine 406, and aspartate 411.

The protein belongs to the phospholipase D family. Cardiolipin synthase subfamily. ClsA sub-subfamily.

Its subcellular location is the cell inner membrane. It catalyses the reaction 2 a 1,2-diacyl-sn-glycero-3-phospho-(1'-sn-glycerol) = a cardiolipin + glycerol. Its function is as follows. Catalyzes the reversible phosphatidyl group transfer from one phosphatidylglycerol molecule to another to form cardiolipin (CL) (diphosphatidylglycerol) and glycerol. In Klebsiella pneumoniae subsp. pneumoniae (strain ATCC 700721 / MGH 78578), this protein is Cardiolipin synthase A.